Reading from the N-terminus, the 338-residue chain is Aspartate carbamoyltransferase catalytic subunit (338 aa).

The carbamoyl phosphate site is built by Arg59 and Thr60. Lys87 provides a ligand contact to L-aspartate. 3 residues coordinate carbamoyl phosphate: Arg109, His142, and Gln145. L-aspartate-binding residues include Arg182 and Arg253. Carbamoyl phosphate is bound by residues Gly294 and Pro295.

This sequence belongs to the aspartate/ornithine carbamoyltransferase superfamily. ATCase family. Heterododecamer (2C3:3R2) of six catalytic PyrB chains organized as two trimers (C3), and six regulatory PyrI chains organized as three dimers (R2).

It carries out the reaction carbamoyl phosphate + L-aspartate = N-carbamoyl-L-aspartate + phosphate + H(+). It functions in the pathway pyrimidine metabolism; UMP biosynthesis via de novo pathway; (S)-dihydroorotate from bicarbonate: step 2/3. In terms of biological role, catalyzes the condensation of carbamoyl phosphate and aspartate to form carbamoyl aspartate and inorganic phosphate, the committed step in the de novo pyrimidine nucleotide biosynthesis pathway. In Prochlorococcus marinus (strain AS9601), this protein is Aspartate carbamoyltransferase catalytic subunit.